We begin with the raw amino-acid sequence, 807 residues long: cAMP-regulated phosphoprotein 21 (807 aa).

The interval 1 to 127 (MSEQGGLTPT…KNREKLSERP (127 aa)) is disordered. Serine 2 carries the post-translational modification N-acetylserine. Serine 32 is subject to Phosphoserine. Positions 32–57 (SLDEEEKLELQRRLAAQNQERRKSKS) form a coiled coil. Phosphoserine; by PKA is present on serine 55. The segment covering 89–98 (IHLQLSSFPS) has biased composition (polar residues). A compositionally biased stretch (basic and acidic residues) spans 101-127 (EEDKSRKDDSEREKEKDKNREKLSERP). Phosphoserine is present on serine 133. The 64-residue stretch at 163–226 (RMILLKMEQE…SVIINKTSST (64 aa)) folds into the R3H domain. The 72-residue stretch at 227-298 (RIPEQRFCEH…VRERIFAHDS (72 aa)) folds into the SUZ domain. The tract at residues 245–282 (SQKRFILKRDNSSIDKEDNQNRMHPFRDDRRSKSIEER) is disordered. Phosphoserine is present on residues asparagine 265 and serine 298. Disordered regions lie at residues 328–434 (LFRA…TSSV), 474–536 (GSIL…QPQM), 552–576 (SQLS…YPAS), and 595–627 (QLST…QQPP). A compositionally biased stretch (low complexity) spans 337 to 348 (GRTSGSRQSSSE). Basic and acidic residues predominate over residues 349 to 358 (TELRWPDHQR). A compositionally biased stretch (polar residues) spans 359–380 (AWSSTDSDSSNRNLKPTMTKTA). Phosphoserine occurs at positions 361 and 381. Over residues 401-421 (GKLSKTGSESSSSAGSSGSLS) the composition is skewed to low complexity. The span at 422 to 434 (RTHPQSTALTSSV) shows a compositional bias: polar residues. Residues 514-524 (QQPPQQQPSPQ) are compositionally biased toward pro residues. Residues 525 to 535 (PQQQVQASQPQ) are compositionally biased toward low complexity. Composition is skewed to polar residues over residues 552–563 (SQLSMSRQSSGD) and 595–613 (QLST…QQVL). The residue at position 557 (serine 557) is a Phosphoserine. An Asymmetric dimethylarginine modification is found at arginine 650.

Interacts with CALM1. In terms of processing, phosphorylation of isoform 2 at Ser-55 is enhanced upon dopamine D1 receptor activation and favors interaction with CALM1. Methylated by CARM1 at Arg-650 in immature thymocytes. In terms of tissue distribution, present at high levels in thymus and low levels in brain. In thymus, isoform 1 is specifically found in immature thymocytes (at protein level).

Its subcellular location is the cytoplasm. In terms of biological role, may act as a competitive inhibitor of calmodulin-dependent enzymes such as calcineurin in neurons. This chain is cAMP-regulated phosphoprotein 21 (Arpp21), found in Mus musculus (Mouse).